The primary structure comprises 962 residues: MFSSFSFLNMFGVLFTVFNLTVVQPYPSHIIIKSFGNNEEVSRVALKAMEYTSDHINSRDDVPFKLAFDHRVVEEGAAVSWNMVNAVCDELKEGAMALLSSVDGKGREGIRGVSDALEMPLVSLTALSNDDHQQQQFGNLFEVSVRPPISELLADFIVHKGWGEVLVLIDPVHASLHLPSLWRHLRTRTNTSVKASMFDLPADEKQFEAYLMQFNMMRNNETNRILIDCASPKRLKKLLINIRSAQFNQANYHYVLANYDFLPYDQEMFQNGNINISGFNIINKDGREYWSLKKHLKTSSSLGGGDDVSVEAAVGHDAMLVTWHGFAKCLQANDSLFHGTFRHRRFFNRGFPGIYCDPLSDRSHPNRPFSSFEHGKTIGVAFRNMKIGHKEGTLTGNIEFDRFGNRKNFDVSIVDLVSNTKATFNSKEVLAWRQGVGFFSNRTVAQHSRKSQNDHKDNQVIVLTNLVAPFVMIKRECLEMANLTECQGNNKFEGFCIDLLKLLADKIEEFNYEIKLGTKAGSKQADGSWDGMIGELLSGRAHAVVASLTINQERERVVDFSKPFMTTGISIMIKKPDKQEFSVFSFMQPLSTEIWMYIIFAYIGVSVVIFLVSRFSPYEWRVEETSRGGFTISNDFSVYNCLWFTLAAFMQQGTDILPRSISGRIASSAWWFFTMIIVSSYTANLAAFLTLEKMQAPIESVEDLAKQSKIKYGIQGGGSTASFFKYSSVQIYQRMWRYMESQVPPVFVASYAEGIERVRSHKGRYAFLLEATANEYENTRKPCDTMKVGANLNSIGYGIATPFGSDWKDHINLAILALQERGELKKLENKWWYDRGQCDAGITVDGSSASLNLSKVAGIFYILMGGMVISMLAALGEFLYRSRIEARKSNSNSMVANFAKNLKSALSSQLRLSVEGGAVAQPGSQSHNAIRRQQVAAFLPANEKEAFNNVDRPANTLYNTAV.

An N-terminal signal peptide occupies residues Met-1–Pro-25. Over Tyr-26–Ser-591 the chain is Extracellular. Residues Asn-190, Asn-220, Asn-275, Asn-333, Asn-441, and Asn-482 are each glycosylated (N-linked (GlcNAc...) asparagine). A helical transmembrane segment spans residues Thr-592–Val-612. Residues Ser-613–Ser-668 are Cytoplasmic-facing. The chain crosses the membrane as a helical span at residues Ala-669–Leu-689. At Thr-690–Lys-855 the chain is on the extracellular side. Asn-852 carries N-linked (GlcNAc...) asparagine glycosylation. The chain crosses the membrane as a helical span at residues Val-856–Gly-876. Residues Glu-877–Val-962 lie on the Cytoplasmic side of the membrane.

Belongs to the glutamate-gated ion channel (TC 1.A.10.1) family. In terms of assembly, interacts with sol-1. Interacts with cni-1; the interaction negatively regulates export of glr-1 from the endoplasmic reticulum to synapses. Interacts with usp-46; the interaction results in deubiquitination of glr-1. Ubiquitinated. Deubiquitinated by usp-46 which prevents its degradation. Post-translationally, glycosylated. Command interneurons of the locomotory control circuit (AIB, AVA, AVB, AVD, AVE and PVC) and motor neurons (RMD, RIM, SMD, AVG, PVQ and URY).

The protein localises to the postsynaptic cell membrane. It localises to the endoplasmic reticulum. Its subcellular location is the synapse. It is found in the cell membrane. The protein resides in the recycling endosome. The protein localises to the cell projection. It localises to the dendrite. Its subcellular location is the perikaryon. Functionally, non-NMDA (N-methyl-D-aspartate) ionotropic glutamate receptor. L-glutamate acts as an excitatory neurotransmitter at many synapses in the central nervous system. The postsynaptic actions of glutamate are mediated by a variety of receptors that are named according to their selective agonists. May contribute to a sensory discrimination between mechanical and chemical stimuli. Plays a role in controlling movement in response to environmental cues such as food availability and mechanosensory stimulation such as the nose touch response. In AIB interneurons, promotes omega turns, a movement that frequently follows backwards locomotion or 'reversals' in response to environmental cues while possibly playing an inhibitory role in alternative neurons to inhibit omega turns. This chain is Glutamate receptor 1, found in Caenorhabditis elegans.